The primary structure comprises 341 residues: ATPase GET3 (341 aa).

An ATP-binding site is contributed by lysine 34–threonine 41. Aspartate 63 is an active-site residue. Residues glutamate 245 and asparagine 272 each coordinate ATP. Zn(2+)-binding residues include cysteine 283 and cysteine 286.

Belongs to the arsA ATPase family. As to quaternary structure, homodimer.

It localises to the cytoplasm. The protein localises to the endoplasmic reticulum. In terms of biological role, ATPase required for the post-translational delivery of tail-anchored (TA) proteins to the endoplasmic reticulum. Recognizes and selectively binds the transmembrane domain of TA proteins in the cytosol. This complex then targets to the endoplasmic reticulum by membrane-bound receptors, where the tail-anchored protein is released for insertion. This process is regulated by ATP binding and hydrolysis. ATP binding drives the homodimer towards the closed dimer state, facilitating recognition of newly synthesized TA membrane proteins. ATP hydrolysis is required for insertion. Subsequently, the homodimer reverts towards the open dimer state, lowering its affinity for the membrane-bound receptor, and returning it to the cytosol to initiate a new round of targeting. This chain is ATPase GET3, found in Paracoccidioides brasiliensis (strain Pb18).